Reading from the N-terminus, the 388-residue chain is Succinate--CoA ligase [ADP-forming] subunit beta (388 aa).

In terms of domain architecture, ATP-grasp spans 9-236 (KKLFAEHGVP…VAAVDPLEQK (228 aa)). ATP-binding positions include lysine 45, 52–54 (GRG), glutamate 91, serine 94, and glutamate 99. Positions 191 and 205 each coordinate Mg(2+). Substrate-binding positions include asparagine 256 and 318-320 (GIT).

This sequence belongs to the succinate/malate CoA ligase beta subunit family. Heterotetramer of two alpha and two beta subunits. Mg(2+) is required as a cofactor.

The enzyme catalyses succinate + ATP + CoA = succinyl-CoA + ADP + phosphate. It catalyses the reaction GTP + succinate + CoA = succinyl-CoA + GDP + phosphate. Its pathway is carbohydrate metabolism; tricarboxylic acid cycle; succinate from succinyl-CoA (ligase route): step 1/1. Functionally, succinyl-CoA synthetase functions in the citric acid cycle (TCA), coupling the hydrolysis of succinyl-CoA to the synthesis of either ATP or GTP and thus represents the only step of substrate-level phosphorylation in the TCA. The beta subunit provides nucleotide specificity of the enzyme and binds the substrate succinate, while the binding sites for coenzyme A and phosphate are found in the alpha subunit. This chain is Succinate--CoA ligase [ADP-forming] subunit beta, found in Parafrankia sp. (strain EAN1pec).